The following is a 375-amino-acid chain: 23S rRNA (uracil(747)-C(5))-methyltransferase RlmC (375 aa).

[4Fe-4S] cluster is bound by residues Cys-3, Cys-11, Cys-14, and Cys-87. Positions 212, 241, 262, and 307 each coordinate S-adenosyl-L-methionine. The active-site Nucleophile is Cys-334.

The protein belongs to the class I-like SAM-binding methyltransferase superfamily. RNA M5U methyltransferase family. RlmC subfamily.

It catalyses the reaction uridine(747) in 23S rRNA + S-adenosyl-L-methionine = 5-methyluridine(747) in 23S rRNA + S-adenosyl-L-homocysteine + H(+). In terms of biological role, catalyzes the formation of 5-methyl-uridine at position 747 (m5U747) in 23S rRNA. The chain is 23S rRNA (uracil(747)-C(5))-methyltransferase RlmC from Escherichia coli O6:H1 (strain CFT073 / ATCC 700928 / UPEC).